The sequence spans 523 residues: Dynein regulatory complex subunit 3 (523 aa).

5 LRR repeats span residues 44-65, 66-87, 88-109, 110-131, and 132-153; these read DVLSLQLDFQNILRIDNLWQFE, NLKKLQLNNNIIERIEGLTNLI, HLVWLDLSFNNIEAIEGLDTLV, NLEDLSLSNNRISKVDSLDALV, and KLQVLSLGNNQISNMMNIIYLR. The LRRCT domain occupies 166–204; that stretch reads NPVSEAEEYKMFIYAYLSDLVYLDFRRVDEQMREMAKMK. Coiled-coil stretches lie at residues 204-242 and 333-393; these read KHQYSIDELKHREAQLQMKLEEEQAKQEKLEEHKMAFVE and LNLN…LVGL.

Belongs to the DRC3 family. As to quaternary structure, component of the nexin-dynein regulatory complex (N-DRC). Interacts with DRC1. Interacts with TCTE1/DRC5. Interacts with DRC7.

The protein resides in the cytoplasm. Its subcellular location is the cytoskeleton. It is found in the cilium axoneme. The protein localises to the cell projection. It localises to the cilium. The protein resides in the flagellum axoneme. Its subcellular location is the flagellum. Its function is as follows. Component of the nexin-dynein regulatory complex (N-DRC) a key regulator of ciliary/flagellar motility which maintains the alignment and integrity of the distal axoneme and regulates microtubule sliding in motile axonemes. The chain is Dynein regulatory complex subunit 3 (Drc3) from Mus musculus (Mouse).